The primary structure comprises 162 residues: Cyclic pyranopterin monophosphate synthase (162 aa).

Substrate contacts are provided by residues 75–77 (MCH) and 115–116 (ME). Asp-130 is an active-site residue.

The protein belongs to the MoaC family. As to quaternary structure, homohexamer; trimer of dimers.

The enzyme catalyses (8S)-3',8-cyclo-7,8-dihydroguanosine 5'-triphosphate = cyclic pyranopterin phosphate + diphosphate. Its pathway is cofactor biosynthesis; molybdopterin biosynthesis. Catalyzes the conversion of (8S)-3',8-cyclo-7,8-dihydroguanosine 5'-triphosphate to cyclic pyranopterin monophosphate (cPMP). The polypeptide is Cyclic pyranopterin monophosphate synthase (Geobacillus kaustophilus (strain HTA426)).